The sequence spans 427 residues: Enolase (427 aa).

Q163 contacts (2R)-2-phosphoglycerate. E205 functions as the Proton donor in the catalytic mechanism. The Mg(2+) site is built by D242, E285, and D312. 4 residues coordinate (2R)-2-phosphoglycerate: K337, R366, S367, and K388. K337 functions as the Proton acceptor in the catalytic mechanism.

The protein belongs to the enolase family. It depends on Mg(2+) as a cofactor.

The protein resides in the cytoplasm. It is found in the secreted. Its subcellular location is the cell surface. The enzyme catalyses (2R)-2-phosphoglycerate = phosphoenolpyruvate + H2O. It functions in the pathway carbohydrate degradation; glycolysis; pyruvate from D-glyceraldehyde 3-phosphate: step 4/5. Catalyzes the reversible conversion of 2-phosphoglycerate (2-PG) into phosphoenolpyruvate (PEP). It is essential for the degradation of carbohydrates via glycolysis. This chain is Enolase, found in Ralstonia nicotianae (strain ATCC BAA-1114 / GMI1000) (Ralstonia solanacearum).